Reading from the N-terminus, the 105-residue chain is Large ribosomal subunit protein eL36 (105 aa).

The segment at 9–31 (VGLNKGHKVTKNVSKPRHSRRRR) is disordered. Basic residues predominate over residues 13–31 (KGHKVTKNVSKPRHSRRRR). An N6-acetyllysine modification is found at Lys62.

This sequence belongs to the eukaryotic ribosomal protein eL36 family. In terms of assembly, component of the large ribosomal subunit.

It is found in the cytoplasm. It localises to the cytosol. Component of the large ribosomal subunit. The ribosome is a large ribonucleoprotein complex responsible for the synthesis of proteins in the cell. The polypeptide is Large ribosomal subunit protein eL36 (RPL36) (Oryctolagus cuniculus (Rabbit)).